The primary structure comprises 406 residues: Tyrosine--tRNA ligase (406 aa).

An L-tyrosine-binding site is contributed by Tyr-35. The short motif at 40–49 (ATSTSLHIGH) is the 'HIGH' region element. Tyr-166 and Gln-170 together coordinate L-tyrosine. Residues 226–230 (KMGKS) carry the 'KMSKS' region motif. Lys-229 provides a ligand contact to ATP. Positions 341-405 (ILLIDLMVLS…IGKKRILRVI (65 aa)) constitute an S4 RNA-binding domain.

It belongs to the class-I aminoacyl-tRNA synthetase family. TyrS type 1 subfamily. Homodimer.

It localises to the cytoplasm. It catalyses the reaction tRNA(Tyr) + L-tyrosine + ATP = L-tyrosyl-tRNA(Tyr) + AMP + diphosphate + H(+). In terms of biological role, catalyzes the attachment of tyrosine to tRNA(Tyr) in a two-step reaction: tyrosine is first activated by ATP to form Tyr-AMP and then transferred to the acceptor end of tRNA(Tyr). This is Tyrosine--tRNA ligase from Borrelia turicatae (strain 91E135).